The following is a 232-amino-acid chain: Biosynthetic peptidoglycan transglycosylase (232 aa).

Residues 14–34 (AAVALVLLYQLWIFAHVLWWI) traverse the membrane as a helical segment.

This sequence belongs to the glycosyltransferase 51 family.

The protein localises to the cell inner membrane. It catalyses the reaction [GlcNAc-(1-&gt;4)-Mur2Ac(oyl-L-Ala-gamma-D-Glu-L-Lys-D-Ala-D-Ala)](n)-di-trans,octa-cis-undecaprenyl diphosphate + beta-D-GlcNAc-(1-&gt;4)-Mur2Ac(oyl-L-Ala-gamma-D-Glu-L-Lys-D-Ala-D-Ala)-di-trans,octa-cis-undecaprenyl diphosphate = [GlcNAc-(1-&gt;4)-Mur2Ac(oyl-L-Ala-gamma-D-Glu-L-Lys-D-Ala-D-Ala)](n+1)-di-trans,octa-cis-undecaprenyl diphosphate + di-trans,octa-cis-undecaprenyl diphosphate + H(+). The protein operates within cell wall biogenesis; peptidoglycan biosynthesis. In terms of biological role, peptidoglycan polymerase that catalyzes glycan chain elongation from lipid-linked precursors. The sequence is that of Biosynthetic peptidoglycan transglycosylase from Thiobacillus denitrificans (strain ATCC 25259 / T1).